A 252-amino-acid chain; its full sequence is Imidazole glycerol phosphate synthase subunit HisF (252 aa).

Active-site residues include D11 and D130.

The protein belongs to the HisA/HisF family. Heterodimer of HisH and HisF.

Its subcellular location is the cytoplasm. The enzyme catalyses 5-[(5-phospho-1-deoxy-D-ribulos-1-ylimino)methylamino]-1-(5-phospho-beta-D-ribosyl)imidazole-4-carboxamide + L-glutamine = D-erythro-1-(imidazol-4-yl)glycerol 3-phosphate + 5-amino-1-(5-phospho-beta-D-ribosyl)imidazole-4-carboxamide + L-glutamate + H(+). Its pathway is amino-acid biosynthesis; L-histidine biosynthesis; L-histidine from 5-phospho-alpha-D-ribose 1-diphosphate: step 5/9. IGPS catalyzes the conversion of PRFAR and glutamine to IGP, AICAR and glutamate. The HisF subunit catalyzes the cyclization activity that produces IGP and AICAR from PRFAR using the ammonia provided by the HisH subunit. The sequence is that of Imidazole glycerol phosphate synthase subunit HisF from Azoarcus sp. (strain BH72).